The chain runs to 542 residues: Glucose-6-phosphate isomerase 2 (542 aa).

The Proton donor role is filled by Glu353. Active-site residues include His384 and Lys505.

It belongs to the GPI family.

Its subcellular location is the cytoplasm. The catalysed reaction is alpha-D-glucose 6-phosphate = beta-D-fructose 6-phosphate. It participates in carbohydrate biosynthesis; gluconeogenesis. It functions in the pathway carbohydrate degradation; glycolysis; D-glyceraldehyde 3-phosphate and glycerone phosphate from D-glucose: step 2/4. In terms of biological role, catalyzes the reversible isomerization of glucose-6-phosphate to fructose-6-phosphate. The chain is Glucose-6-phosphate isomerase 2 from Cupriavidus pinatubonensis (strain JMP 134 / LMG 1197) (Cupriavidus necator (strain JMP 134)).